The sequence spans 291 residues: Potassium-transporting ATPase subunit beta (291 aa).

Over 1–36 (MAALQEKKSCSQRMEEFRHYCWNPDTGQMLGRTLSR) the chain is Cytoplasmic. A helical; Signal-anchor for type II membrane protein transmembrane segment spans residues 37 to 57 (WVWISLYYVAFYVVMTGLFAL). Residues 58–291 (CIYVLMQTID…KVEFKLKIQK (234 aa)) lie on the Extracellular side of the membrane. Residues asparagine 99, asparagine 103, asparagine 130, asparagine 146, and asparagine 161 are each glycosylated (N-linked (GlcNAc...) asparagine). An intrachain disulfide couples cysteine 131 to cysteine 152. A disulfide bond links cysteine 162 and cysteine 178. N-linked (GlcNAc...) asparagine glycosylation is found at asparagine 193 and asparagine 222. The immunoglobulin-like stretch occupies residues 194–291 (STPPRVDCTF…KVEFKLKIQK (98 aa)). An intrachain disulfide couples cysteine 201 to cysteine 263.

The protein belongs to the X(+)/potassium ATPases subunit beta family. The ATPase pump is composed of two subunits: alpha (catalytic) and beta (regulatory). Interacts with alpha subunit ATP12A; this interaction is required for the formation of a functionally active pump and targeting at the plasma membrane. Interacts (via N-terminus) with alpha subunit ATP4A (via the P-domain). In terms of processing, N-glycosylation is necessary for assembly and functional expression of the pump at the plasma membrane.

The protein localises to the apical cell membrane. Its subcellular location is the cell membrane. Its function is as follows. The beta subunit of the gastric H(+)/K(+) ATPase pump which transports H(+) ions in exchange for K(+) ions across the apical membrane of parietal cells. Plays a structural and regulatory role in the assembly and membrane targeting of a functionally active pump. Within a transport cycle, the transfer of a H(+) ion across the membrane is coupled to ATP hydrolysis and is associated with a transient phosphorylation of the alpha subunit that shifts the pump conformation from inward-facing (E1) to outward-facing state (E2). Interacts with the phosphorylation domain of the alpha subunit and functions as a ratchet, stabilizing the lumenal-open E2 conformation and preventing the reverse reaction of the transport cycle. This is Potassium-transporting ATPase subunit beta (ATP4B) from Oryctolagus cuniculus (Rabbit).